The chain runs to 424 residues: MKDNNNYNVLIVGNKGREYALAQRLQQDERVNALYFCLGNGGTQDLGENLECEHYEHIVELALKKQIHLAIISEEEPLILGLTEMLEKAGILVFGASKEAAKLEASKSYMKAFVKECGIKSASYFETNDLKEALNYIQNASFPLVIKALNKNTSIVHHQEEALKILEDALKQSNEPVIIEPFLEGFELSVTALIANDDFILLPFCQNYKRLLEGDNGVNTGGMGAIAPANFFSNELEEKIKNHIFKPTLEKLQADNTPFKGVLLAEIVIIEEKGVLEPYLLDFSVRFKDIECQTILPLVENPLLDLFLATAKGELHSLELVFSKEFVMSVALVSRNYPTSSSPKQTLYIDPVDEKKGHLILGEVEQDNGVFESSGGRVIFAIGRGKSLLEARNHAYEIAQKVHFEGMFYRKDIGFKVLDLKEYS.

The region spanning Lys111–Lys312 is the ATP-grasp domain. Residue Ile137–Ser189 coordinates ATP.

It belongs to the GARS family.

The catalysed reaction is 5-phospho-beta-D-ribosylamine + glycine + ATP = N(1)-(5-phospho-beta-D-ribosyl)glycinamide + ADP + phosphate + H(+). It functions in the pathway purine metabolism; IMP biosynthesis via de novo pathway; N(1)-(5-phospho-D-ribosyl)glycinamide from 5-phospho-alpha-D-ribose 1-diphosphate: step 2/2. The chain is Phosphoribosylamine--glycine ligase (purD) from Helicobacter pylori (strain J99 / ATCC 700824) (Campylobacter pylori J99).